Reading from the N-terminus, the 290-residue chain is OTU domain-containing protein 6A (290 aa).

The tract at residues 27–117 (QTLKASVPKN…RRHQERMPAA (91 aa)) is disordered. The segment covering 49–68 (SRLEAEMEQRHKQELEKFGE) has biased composition (basic and acidic residues). The span at 95 to 108 (KAQKRRDRRAHQER) shows a compositional bias: basic residues. Positions 142–276 (LEMKTIPADG…GEHYNSVKPI (135 aa)) constitute an OTU domain. Residues 147 to 153 (IPADGHC) form a cys-loop region. Aspartate 150 is a catalytic residue. Cysteine 153 serves as the catalytic Nucleophile. Residues 211–221 (IVHNASWGGQL) form a variable-loop region. A his-loop region spans residues 259 to 269 (YLHYACDFGEH). The active site involves histidine 269.

It catalyses the reaction Thiol-dependent hydrolysis of ester, thioester, amide, peptide and isopeptide bonds formed by the C-terminal Gly of ubiquitin (a 76-residue protein attached to proteins as an intracellular targeting signal).. Functionally, deubiquitinating enzyme that hydrolyzes 'Lys-27'-, 'Lys-29'- and 'Lys-33'-linked polyubiquitin chains. Also able to hydrolyze 'Lys-11'-linked ubiquitin chains. This chain is OTU domain-containing protein 6A (Otud6a), found in Mus musculus (Mouse).